Here is a 246-residue protein sequence, read N- to C-terminus: Isoprenyl transferase 1 (246 aa).

Asp19 is a catalytic residue. Asp19 provides a ligand contact to Mg(2+). Substrate-binding positions include 20-23, Trp24, Arg32, His36, and 64-66; these read GNGR and STD. Asn67 functions as the Proton acceptor in the catalytic mechanism. Substrate is bound by residues Trp68, Arg70, Arg180, and 186–188; that span reads RLS. Glu199 lines the Mg(2+) pocket.

This sequence belongs to the UPP synthase family. As to quaternary structure, homodimer. Requires Mg(2+) as cofactor.

Catalyzes the condensation of isopentenyl diphosphate (IPP) with allylic pyrophosphates generating different type of terpenoids. This Bradyrhizobium diazoefficiens (strain JCM 10833 / BCRC 13528 / IAM 13628 / NBRC 14792 / USDA 110) protein is Isoprenyl transferase 1.